The primary structure comprises 295 residues: Threonine/homoserine exporter RhtA (295 aa).

Residues 1 to 9 (MPGSLRKMP) are Cytoplasmic-facing. Residues 10-30 (VWLPIVILLVAMASIQGGASL) form a helical membrane-spanning segment. The 106-residue stretch at 30–135 (LAKSLFPLVG…VLAVLGLWFL (106 aa)) folds into the EamA 1 domain. At 31 to 38 (AKSLFPLV) the chain is on the periplasmic side. The chain crosses the membrane as a helical span at residues 39-59 (GAPGVTALRLALGTLILIAFF). At 60-71 (KPWRLRFAKEQR) the chain is on the cytoplasmic side. The helical transmembrane segment at 72–92 (LPLLFYGVSLGGMNYLFYLSI) threads the bilayer. A topological domain (periplasmic) is located at residue Gln-93. A helical transmembrane segment spans residues 94–114 (TVPLGIAVALEFTGPLAVALF). The Cytoplasmic segment spans residues 115-118 (SSRR). The chain crosses the membrane as a helical span at residues 119–139 (PVDFVWVVLAVLGLWFLLPLG). Over 140-146 (QDVSHVD) the chain is Periplasmic. The chain crosses the membrane as a helical span at residues 147–167 (LTGCALALGAGACWAIYILSG). Positions 159 to 278 (CWAIYILSGQ…LGAIIAASMG (120 aa)) constitute an EamA 2 domain. The Cytoplasmic portion of the chain corresponds to 168–175 (QRAGAEHG). The helical transmembrane segment at 176–196 (PATVAIGSLIAALIFVPIGAL) threads the bilayer. Topologically, residues 197–200 (QAGE) are periplasmic. A helical membrane pass occupies residues 201–221 (ALWHWSVIPLGLAVAILSTAL). The Cytoplasmic segment spans residues 222–237 (PYSLEMIALTRLPTRT). The helical transmembrane segment at 238–258 (FGTLMSMEPALAAVSGMIFLG) threads the bilayer. The Periplasmic segment spans residues 259–262 (ETLT). Residues 263 to 283 (PIQLLALGAIIAASMGSTLTV) traverse the membrane as a helical segment. At 284–295 (RKESKIKELDIN) the chain is on the cytoplasmic side.

This sequence belongs to the drug/metabolite transporter (DMT) superfamily. 10 TMS drug/metabolite exporter (DME) (TC 2.A.7.3) family.

The protein localises to the cell inner membrane. Its function is as follows. Involved in the efflux of threonine and homoserine. This Escherichia coli O157:H7 protein is Threonine/homoserine exporter RhtA (rhtA).